The primary structure comprises 382 residues: uncharacterized protein (382 aa).

An N-terminal signal peptide occupies residues 1-25 (MKKWMAAVFVMMLMLCFGGIENVKA). The Nucleophile role is filled by Ser-186. Active-site residues include Asp-354 and His-357.

Belongs to the 'GDSL' lipolytic enzyme family.

This is an uncharacterized protein from Bacillus subtilis (strain 168).